The chain runs to 312 residues: Ribonuclease Z (312 aa).

Zn(2+) contacts are provided by histidine 63, histidine 65, aspartate 67, histidine 68, histidine 141, aspartate 212, and histidine 270. Aspartate 67 (proton acceptor) is an active-site residue.

This sequence belongs to the RNase Z family. As to quaternary structure, homodimer. Requires Zn(2+) as cofactor.

It catalyses the reaction Endonucleolytic cleavage of RNA, removing extra 3' nucleotides from tRNA precursor, generating 3' termini of tRNAs. A 3'-hydroxy group is left at the tRNA terminus and a 5'-phosphoryl group is left at the trailer molecule.. In terms of biological role, zinc phosphodiesterase, which displays some tRNA 3'-processing endonuclease activity. Probably involved in tRNA maturation, by removing a 3'-trailer from precursor tRNA. The polypeptide is Ribonuclease Z (Latilactobacillus sakei subsp. sakei (strain 23K) (Lactobacillus sakei subsp. sakei)).